Consider the following 700-residue polypeptide: Peroxisomal acyl-coenzyme A oxidase 1 (700 aa).

FAD-binding positions include Thr-147, Gly-186, and 412-417 (CGGHGY). Glu-437 (proton acceptor) is an active-site residue. The Microbody targeting signal motif lies at 698–700 (SKL).

It belongs to the acyl-CoA oxidase family. FAD is required as a cofactor.

It is found in the peroxisome. The catalysed reaction is a 2,3-saturated acyl-CoA + O2 = a (2E)-enoyl-CoA + H2O2. In terms of biological role, catalyzes the desaturation of acyl-CoAs to 2-trans-enoyl-CoAs. First enzyme of the fatty acid beta-oxidation pathway. This chain is Peroxisomal acyl-coenzyme A oxidase 1 (acox1), found in Dictyostelium discoideum (Social amoeba).